Consider the following 329-residue polypeptide: Glycerol-3-phosphate dehydrogenase [NAD(P)+] (329 aa).

The NADPH site is built by Ser10, Trp11, Arg31, and Lys105. Sn-glycerol 3-phosphate is bound by residues Lys105, Gly134, and Ser136. NADPH is bound at residue Ala138. Sn-glycerol 3-phosphate-binding residues include Lys189, Asp242, Ser252, Arg253, and Asn254. Lys189 serves as the catalytic Proton acceptor. Position 253 (Arg253) interacts with NADPH. Positions 277 and 279 each coordinate NADPH.

Belongs to the NAD-dependent glycerol-3-phosphate dehydrogenase family.

The protein resides in the cytoplasm. The catalysed reaction is sn-glycerol 3-phosphate + NAD(+) = dihydroxyacetone phosphate + NADH + H(+). The enzyme catalyses sn-glycerol 3-phosphate + NADP(+) = dihydroxyacetone phosphate + NADPH + H(+). It participates in membrane lipid metabolism; glycerophospholipid metabolism. Its function is as follows. Catalyzes the reduction of the glycolytic intermediate dihydroxyacetone phosphate (DHAP) to sn-glycerol 3-phosphate (G3P), the key precursor for phospholipid synthesis. The protein is Glycerol-3-phosphate dehydrogenase [NAD(P)+] of Neisseria meningitidis serogroup C (strain 053442).